A 498-amino-acid polypeptide reads, in one-letter code: MTYLLAIDQGTTSSRAMLFREDLSVAAQAQQEVPQHFPASGWVEHDPEDIWATTLATCRAAMEKGGVTAREIAAIGISNQRETTVVWERASGKAIHRAIVWQDRRTADVCARLQADGHEPLIATRTGLIADPYFSGTKIAWILDAVPGARARAERGELLFGTVDCYLLWRLTGGAVHATDATNASRTLLFDIYAGAWDDDLLRLLRVPRAMLPRVRDCAAEFGTTLPDLLGGPIAVRGIAGDQQAATVGQACFAPGMMKSTYGTGCFALLNTGATAVASKNKLLTTIAYQLNGVRTYALEGSIFVAGSAVQWLRDGLHLIKTAHDSDDLAPLADATQAVYLVPAFVGLGAPYWNPRVRGALFGLTRNTGPAEFAQAALESVCYQTHDLWTAMRADWPDGVTQNAALRVDGGMAVSDWTMQRLADILNVTVDRPVIPETTALGAAYLAGLASGICPPPAEFAARWQLDRRFTPEMDEETRARKLTGWTRAVKGLLASED.

Residue T11 coordinates ADP. T11, T12, and S13 together coordinate ATP. T11 lines the sn-glycerol 3-phosphate pocket. R15 is an ADP binding site. The sn-glycerol 3-phosphate site is built by R81, E82, Y133, and D242. The glycerol site is built by R81, E82, Y133, D242, and Q243. Residues T264 and G307 each coordinate ADP. Residues T264, G307, Q311, and G411 each contribute to the ATP site. G411 is a binding site for ADP.

Belongs to the FGGY kinase family.

It carries out the reaction glycerol + ATP = sn-glycerol 3-phosphate + ADP + H(+). It functions in the pathway polyol metabolism; glycerol degradation via glycerol kinase pathway; sn-glycerol 3-phosphate from glycerol: step 1/1. Inhibited by fructose 1,6-bisphosphate (FBP). In terms of biological role, key enzyme in the regulation of glycerol uptake and metabolism. Catalyzes the phosphorylation of glycerol to yield sn-glycerol 3-phosphate. The sequence is that of Glycerol kinase from Afipia carboxidovorans (strain ATCC 49405 / DSM 1227 / KCTC 32145 / OM5) (Oligotropha carboxidovorans).